We begin with the raw amino-acid sequence, 2647 residues long: Filamin-A (2647 aa).

Residues 1 to 37 are disordered; sequence MSSSHSRCGQSAAVASPGGSIDSRDAEMPATEKDLAE. The residue at position 2 (Ser-2) is an N-acetylserine. Residues 2 to 274 are actin-binding; it reads SSSHSRCGQS…PKAKLKPGAP (273 aa). A phosphoserine mark is found at Ser-11, Ser-16, and Ser-20. Positions 22-37 are enriched in basic and acidic residues; that stretch reads DSRDAEMPATEKDLAE. Residues Lys-42, Lys-43, and Lys-135 each participate in a glycyl lysine isopeptide (Lys-Gly) (interchain with G-Cter in ubiquitin) cross-link. 2 Calponin-homology (CH) domains span residues 43-149 and 166-269; these read KIQQ…LHYS and QTPK…KAKL. The tract at residues 271–294 is disordered; that stretch reads PGAPLRPKLNPKKARAYGPGIEPT. 15 Filamin repeats span residues 276–374, 376–474, 475–570, 571–663, 667–763, 764–866, 867–965, 966–1061, 1062–1154, 1155–1249, 1250–1349, 1350–1442, 1443–1539, 1540–1636, and 1641–1740; these read RPKL…EVYV, KSQG…TVTV, GQAC…EVKV, GTEC…MADI, PQDF…RVNV, GAGS…RVKV, EPSH…SVGV, SPSL…PLEA, VAPT…KAHV, APCF…KLQV, EPAV…QVPV, TEGC…KVPV, HDVT…KVKV, LPTH…RVRA, and DASK…QVTA. A Glycyl lysine isopeptide (Lys-Gly) (interchain with G-Cter in SUMO1); alternate cross-link involves residue Lys-299. Lys-299 participates in a covalent cross-link: Glycyl lysine isopeptide (Lys-Gly) (interchain with G-Cter in SUMO2); alternate. Lys-376 and Lys-508 each carry N6-acetyllysine. N6-acetyllysine occurs at positions 700, 781, 837, 865, and 906. 2 positions are modified to phosphoserine: Ser-968 and Ser-1055. Position 1071 is an N6-acetyllysine; alternate (Lys-1071). Lys-1071 is modified (N6-succinyllysine; alternate). At Ser-1084 the chain carries Phosphoserine. Thr-1089 is modified (phosphothreonine). Residues Ser-1301 and Ser-1338 each carry the phosphoserine modification. The residue at position 1372 (Lys-1372) is an N6-acetyllysine. Phosphoserine is present on residues Ser-1459 and Ser-1533. The interval 1490–1607 is interaction with furin; that stretch reads PKGLVEPVDV…DNHDGTYTVA (118 aa). N6-acetyllysine is present on Lys-1538. Phosphoserine occurs at positions 1630 and 1734. Residues 1741 to 1778 form a hinge 1 region; sequence LAGDQPTVQTPLRSQQLAPQYNYPQGSQQTWIPERPMV. At Thr-1750 the chain carries Phosphothreonine. Filamin repeat units follow at residues 1765-1860, 1861-1952, 1953-2039, 2042-2134, 2135-2230, 2233-2325, 2327-2420, and 2424-2516; these read QGSQ…QFYV, DYVN…TARV, TGDD…PVVI, SEIG…SVKV, TGEG…QFTV, LGEG…VVPV, SPSG…KIRV, and GHGG…KAKV. Phosphoserine is present on Ser-1835. Residues Ser-1967, Ser-2053, Ser-2128, Ser-2152, Ser-2158, Ser-2163, Ser-2180, Ser-2284, Ser-2327, and Ser-2329 each carry the phosphoserine modification. Residue Thr-2336 is modified to Phosphothreonine. A phosphoserine mark is found at Ser-2338, Ser-2370, Ser-2414, Ser-2510, Ser-2523, and Ser-2526. Positions 2517–2553 are hinge 2; sequence TGPRLVSNHSLHETSSVFVDSLTKVATVPQHATSGPG. The self-association site, tail stretch occupies residues 2517 to 2647; the sequence is TGPRLVSNHS…PGSPYRIMVP (131 aa). A Filamin 24 repeat occupies 2552–2646; the sequence is PGPADVSKVV…IPGSPYRIMV (95 aa). Lys-2569 bears the N6-acetyllysine; alternate mark. Lys-2569 is modified (N6-succinyllysine; alternate). Lys-2575 bears the N6-acetyllysine mark. Thr-2599 carries the post-translational modification Phosphothreonine. Residues Lys-2607 and Lys-2621 each carry the N6-acetyllysine modification.

The protein belongs to the filamin family. As to quaternary structure, homodimer. Interacts with FCGR1A, FLNB, FURIN, HSPB7, KCND2, INPPL1, MYOT, MYOZ1, PDLIM2, ARHGAP24, PSEN1, PSEN2 and ECSCR. Also interacts with various other binding partners in addition to filamentous actin. Interacts (via N-terminus) with TAF1B. Interacts (via N-terminus) with MIS18BP1 (via N-terminus). Interacts with TMEM67 (via C-terminus) and MKS1. Interacts (via actin-binding domain) with MICALL2 (via calponin-homology (CH) domain). Interacts with RFLNA and RFLNB. Interacts (via filamin repeat 5) with SYK; docks SYK to the plasma membrane. Interacts (via filamin repeats 19 and 21) with DRD3; increased PKA-mediated phosphorylation at Ser-2152. Interacts (via filamin repeat 21) with MAS1, AGTR1 and ADRA1D; increases PKA-mediated phosphorylation of FLNA at Ser-2152. Interacts (via filamin repeats 4, 9, 12, 17, 19, 21, and 23) with GP1BA (high affinity), ITGB7, ITGB2 and FBLIM1. Interacts with CEACAM1 (via cytoplasmic domain); inhibits cell migration and cell scattering by interfering with the interaction between FLNA and RALA. Interacts with FOXC1. Interacts (via calponin-homology (CH) domain 1 and filamin repeat 24) with CRMP1; the interaction alters FLNA ternary structure and thus promotes FLNA dissociation from F-actin. Interacts with DPYSL3/CRMP3 and DPYSL4/CRMP4. Phosphorylation at Ser-2152 is negatively regulated by the autoinhibited conformation of filamin repeats 19-21. Ligand binding induces a conformational switch triggering phosphorylation at Ser-2152 by PKA. Post-translationally, polyubiquitination in the CH1 domain by a SCF-like complex containing ASB2 leads to proteasomal degradation. Prior dissociation from actin may be required to expose the target lysines. Ubiquitinated in endothelial cells by RNF213 downstream of the non-canonical Wnt signaling pathway, leading to its degradation by the proteasome. Widely expressed. Highly expressed in Purkinje cells.

Its subcellular location is the cytoplasm. The protein resides in the cell cortex. The protein localises to the cytoskeleton. It is found in the perikaryon. It localises to the cell projection. Its subcellular location is the growth cone. The protein resides in the podosome. In terms of biological role, actin binding protein that promotes orthogonal branching of actin filaments and links actin filaments to membrane glycoproteins. Anchors various transmembrane proteins to the actin cytoskeleton and serves as a scaffold for a wide range of cytoplasmic signaling proteins. Interaction with FLNB may allow neuroblast migration from the ventricular zone into the cortical plate. Tethers cell surface-localized furin, modulates its rate of internalization and directs its intracellular trafficking. Involved in ciliogenesis. Plays a role in cell-cell contacts and adherens junctions during the development of blood vessels, heart and brain organs. Plays a role in platelets morphology through interaction with SYK that regulates ITAM- and ITAM-like-containing receptor signaling, resulting in by platelet cytoskeleton organization maintenance. During the axon guidance process, required for growth cone collapse induced by SEMA3A-mediated stimulation of neurons. The polypeptide is Filamin-A (Flna) (Mus musculus (Mouse)).